Reading from the N-terminus, the 720-residue chain is Polyribonucleotide nucleotidyltransferase (720 aa).

Residues D484 and D490 each coordinate Mg(2+). Residues 551–610 (PRMYKINIDPSKIGSVIGSGGKTIRSIIEQTNTTVDIENDGTVVIGATDEASAKKAIKII) form the KH domain. The S1 motif domain maps to 620-688 (GSIYTGKVTR…NQGRVNLSHR (69 aa)). A disordered region spans residues 697–720 (PISRNRDSQPRRPGPFRPSDRSNS).

Belongs to the polyribonucleotide nucleotidyltransferase family. Mg(2+) is required as a cofactor.

The protein localises to the cytoplasm. The catalysed reaction is RNA(n+1) + phosphate = RNA(n) + a ribonucleoside 5'-diphosphate. Its function is as follows. Involved in mRNA degradation. Catalyzes the phosphorolysis of single-stranded polyribonucleotides processively in the 3'- to 5'-direction. The chain is Polyribonucleotide nucleotidyltransferase from Dehalococcoides mccartyi (strain CBDB1).